A 315-amino-acid polypeptide reads, in one-letter code: MDALLKEIEKLSQPSLQKENNDVCDLCFMQMKKISNYQLLCEECGQLKDWFEPEYNEKFTVYSRLKIVGANSSYHQRDLDKANSSDYSSLQFHHILEELKSLNVKYMDAGQKPFPIQVLKETAHSYNQVQQHRVIRSITKLQILASILRSICLKLNIACTVADAARFTQLNTKGISRGMDLLRSLFVDNKITLNVDLNPIDSFINSTYNALQIKQIHQELQEENVYNLKEIVKSFILYADEKNIGVDLNRRTVVIATMYNVLRRAYYPIEIDTVVYQCKIRKNTITRALKMYEDYYSHFKSLYEQYHLNAAKKLI.

The protein belongs to the asfivirus C315R family.

Functionally, putative initation factor. This chain is Initiation factor TFIIB homolog, found in Ornithodoros (relapsing fever ticks).